We begin with the raw amino-acid sequence, 296 residues long: Cytidine deaminase (296 aa).

CMP/dCMP-type deaminase domains lie at 47–167 (TEAE…FGPK) and 186–296 (DSSD…VDPV). Position 88 to 90 (88 to 90 (NLE)) interacts with substrate. A Zn(2+)-binding site is contributed by His-101. The active-site Proton donor is the Glu-103. 2 residues coordinate Zn(2+): Cys-128 and Cys-131.

The protein belongs to the cytidine and deoxycytidylate deaminase family. In terms of assembly, homodimer. Zn(2+) is required as a cofactor.

The catalysed reaction is cytidine + H2O + H(+) = uridine + NH4(+). It catalyses the reaction 2'-deoxycytidine + H2O + H(+) = 2'-deoxyuridine + NH4(+). In terms of biological role, this enzyme scavenges exogenous and endogenous cytidine and 2'-deoxycytidine for UMP synthesis. The chain is Cytidine deaminase from Shewanella sp. (strain MR-4).